The chain runs to 103 residues: MDPRLTHEDRILHLAPLTEKGWLLVEGRDAIHKEFKFKDFNAAFGFMTRVALLAEKMDHHPEWFNVYNKVQITLSSHDVAGLSQRDIKLASFIEKAAVGASTS.

Belongs to the pterin-4-alpha-carbinolamine dehydratase family.

It catalyses the reaction (4aS,6R)-4a-hydroxy-L-erythro-5,6,7,8-tetrahydrobiopterin = (6R)-L-erythro-6,7-dihydrobiopterin + H2O. Functionally, involved in tetrahydrobiopterin biosynthesis. This is Probable pterin-4-alpha-carbinolamine dehydratase (Pcd) from Hypsibius exemplaris (Freshwater tardigrade).